The primary structure comprises 636 residues: Threonine--tRNA ligase (636 aa).

One can recognise a TGS domain in the interval 1–61; that stretch reads MINITLPDDS…RNDCAVRLIT (61 aa). The interval 238 to 528 is catalytic; sequence DHRKIGTRMG…LVEHFAGKFP (291 aa). 3 residues coordinate Zn(2+): Cys329, His380, and His505.

The protein belongs to the class-II aminoacyl-tRNA synthetase family. As to quaternary structure, homodimer. Zn(2+) is required as a cofactor.

It localises to the cytoplasm. It carries out the reaction tRNA(Thr) + L-threonine + ATP = L-threonyl-tRNA(Thr) + AMP + diphosphate + H(+). Its function is as follows. Catalyzes the attachment of threonine to tRNA(Thr) in a two-step reaction: L-threonine is first activated by ATP to form Thr-AMP and then transferred to the acceptor end of tRNA(Thr). Also edits incorrectly charged L-seryl-tRNA(Thr). This chain is Threonine--tRNA ligase, found in Desulforapulum autotrophicum (strain ATCC 43914 / DSM 3382 / VKM B-1955 / HRM2) (Desulfobacterium autotrophicum).